A 119-amino-acid polypeptide reads, in one-letter code: UPF0102 protein Athe_0977 (119 aa).

Belongs to the UPF0102 family.

The sequence is that of UPF0102 protein Athe_0977 from Caldicellulosiruptor bescii (strain ATCC BAA-1888 / DSM 6725 / KCTC 15123 / Z-1320) (Anaerocellum thermophilum).